The chain runs to 425 residues: Adenylosuccinate synthetase (425 aa).

GTP contacts are provided by residues 12-18 and 40-42; these read GDEGKGK and GHT. Catalysis depends on Asp13, which acts as the Proton acceptor. Mg(2+)-binding residues include Asp13 and Gly40. IMP is bound by residues 13-16, 38-41, Thr130, Arg144, Gln224, Thr239, and Arg301; these read DEGK and NAGH. His41 functions as the Proton donor in the catalytic mechanism. Residue 297-303 participates in substrate binding; it reads TVSNRRR. GTP-binding positions include Arg303, 329–331, and 411–413; these read KLD and STS.

This sequence belongs to the adenylosuccinate synthetase family. In terms of assembly, homodimer. The cofactor is Mg(2+).

Its subcellular location is the cytoplasm. The enzyme catalyses IMP + L-aspartate + GTP = N(6)-(1,2-dicarboxyethyl)-AMP + GDP + phosphate + 2 H(+). It functions in the pathway purine metabolism; AMP biosynthesis via de novo pathway; AMP from IMP: step 1/2. Functionally, plays an important role in the de novo pathway of purine nucleotide biosynthesis. Catalyzes the first committed step in the biosynthesis of AMP from IMP. This is Adenylosuccinate synthetase from Wolbachia sp. subsp. Drosophila simulans (strain wRi).